A 528-amino-acid chain; its full sequence is Membrane protein insertase YidC (528 aa).

The next 5 membrane-spanning stretches (helical) occupy residues 13-33 (ILLA…FFIP), 336-356 (WGWA…PLTY), 406-426 (LPIL…LNAI), 446-466 (YFIL…ITPM), and 481-501 (PVIF…YWFV).

It belongs to the OXA1/ALB3/YidC family. Type 1 subfamily. Interacts with the Sec translocase complex via SecD. Specifically interacts with transmembrane segments of nascent integral membrane proteins during membrane integration.

It is found in the cell inner membrane. Functionally, required for the insertion and/or proper folding and/or complex formation of integral membrane proteins into the membrane. Involved in integration of membrane proteins that insert both dependently and independently of the Sec translocase complex, as well as at least some lipoproteins. Aids folding of multispanning membrane proteins. The sequence is that of Membrane protein insertase YidC from Campylobacter jejuni subsp. jejuni serotype O:2 (strain ATCC 700819 / NCTC 11168).